The chain runs to 347 residues: Eukaryotic translation initiation factor 3 subunit I (347 aa).

6 WD repeats span residues 8-49 (GHER…GTYE), 50-89 (GHNGTVWTVDVDSTSTLLVSGSADNQMRLWEVATGKCLFT), 146-186 (TFSG…PESG), 198-237 (AHTDVISDLQMSADRTYFVTSSRDKTSKLIDSKTLQVIKT), 239-278 (ATETPLNSASIHPTKPFVIVGGGQDAMNVTTTSARQGRFE), and 295-336 (GHFG…SKLY).

The protein belongs to the eIF-3 subunit I family. In terms of assembly, component of the eukaryotic translation initiation factor 3 (eIF-3) complex.

The protein localises to the cytoplasm. In terms of biological role, component of the eukaryotic translation initiation factor 3 (eIF-3) complex, which is involved in protein synthesis of a specialized repertoire of mRNAs and, together with other initiation factors, stimulates binding of mRNA and methionyl-tRNAi to the 40S ribosome. The eIF-3 complex specifically targets and initiates translation of a subset of mRNAs involved in cell proliferation. The protein is Eukaryotic translation initiation factor 3 subunit I of Mycosarcoma maydis (Corn smut fungus).